The primary structure comprises 178 residues: NADH-quinone oxidoreductase subunit B (178 aa).

The [4Fe-4S] cluster site is built by Cys-45, Cys-46, Cys-111, and Cys-140.

This sequence belongs to the complex I 20 kDa subunit family. NDH-1 is composed of 15 different subunits. Subunits NuoB, C, D, E, F, and G constitute the peripheral sector of the complex. [4Fe-4S] cluster is required as a cofactor.

The protein resides in the cell membrane. The catalysed reaction is a quinone + NADH + 5 H(+)(in) = a quinol + NAD(+) + 4 H(+)(out). NDH-1 shuttles electrons from NADH, via FMN and iron-sulfur (Fe-S) centers, to quinones in the respiratory chain. The immediate electron acceptor for the enzyme in this species is believed to be a menaquinone. Couples the redox reaction to proton translocation (for every two electrons transferred, four hydrogen ions are translocated across the cytoplasmic membrane), and thus conserves the redox energy in a proton gradient. The protein is NADH-quinone oxidoreductase subunit B of Deinococcus deserti (strain DSM 17065 / CIP 109153 / LMG 22923 / VCD115).